Here is a 23-residue protein sequence, read N- to C-terminus: NADP phosphatase 2 (23 aa).

Homodimer.

Its subcellular location is the cytoplasm. This Arthrobacter sp. (strain KM) protein is NADP phosphatase 2.